Consider the following 178-residue polypeptide: MLEGIVRESIGRKSSKALRRDGYLIANIYAKGFKNINAAFKVNDFIKVVKAKTTLPFEVKIADKTYKVVVQDYQKHPVTNALKHVDLRIVLDNEISHYLVPVKIVGVAKGLRNKGILVQSKRRLTVKCAGKDLPNEFVLDVSDLDVNDSLLVRDIKLPDNVSIVENNSVAVVGVSTAQ.

The protein belongs to the bacterial ribosomal protein bL25 family. CTC subfamily. Part of the 50S ribosomal subunit; part of the 5S rRNA/L5/L18/L25 subcomplex. Contacts the 5S rRNA. Binds to the 5S rRNA independently of L5 and L18.

Its function is as follows. This is one of the proteins that binds to the 5S RNA in the ribosome where it forms part of the central protuberance. The chain is Large ribosomal subunit protein bL25 from Campylobacter hominis (strain ATCC BAA-381 / DSM 21671 / CCUG 45161 / LMG 19568 / NCTC 13146 / CH001A).